Reading from the N-terminus, the 150-residue chain is Macrodomain Ter protein (150 aa).

This sequence belongs to the MatP family. In terms of assembly, homodimer.

Its subcellular location is the cytoplasm. In terms of biological role, required for spatial organization of the terminus region of the chromosome (Ter macrodomain) during the cell cycle. Prevents early segregation of duplicated Ter macrodomains during cell division. Binds specifically to matS, which is a 13 bp signature motif repeated within the Ter macrodomain. The chain is Macrodomain Ter protein from Escherichia coli O8 (strain IAI1).